Reading from the N-terminus, the 464-residue chain is Cysteine--tRNA ligase (464 aa).

Cysteine 29 is a Zn(2+) binding site. The 'HIGH' region signature appears at 31-41 (ATVQGVPHIGH). The interval 160-180 (RLDEVQQGESTASGKRDPRDF) is disordered. Positions 208, 233, and 237 each coordinate Zn(2+). The 'KMSKS' region signature appears at 264–268 (KMSKS). Lysine 267 contributes to the ATP binding site.

The protein belongs to the class-I aminoacyl-tRNA synthetase family. Monomer. It depends on Zn(2+) as a cofactor.

The protein resides in the cytoplasm. The catalysed reaction is tRNA(Cys) + L-cysteine + ATP = L-cysteinyl-tRNA(Cys) + AMP + diphosphate. This chain is Cysteine--tRNA ligase, found in Saccharopolyspora erythraea (strain ATCC 11635 / DSM 40517 / JCM 4748 / NBRC 13426 / NCIMB 8594 / NRRL 2338).